A 192-amino-acid polypeptide reads, in one-letter code: Orotate phosphoribosyltransferase (192 aa).

116–124 (EDVVTTGKS) serves as a coordination point for 5-phospho-alpha-D-ribose 1-diphosphate. 2 residues coordinate orotate: Thr120 and Arg148.

It belongs to the purine/pyrimidine phosphoribosyltransferase family. PyrE subfamily. In terms of assembly, homodimer. Mg(2+) serves as cofactor.

The catalysed reaction is orotidine 5'-phosphate + diphosphate = orotate + 5-phospho-alpha-D-ribose 1-diphosphate. Its pathway is pyrimidine metabolism; UMP biosynthesis via de novo pathway; UMP from orotate: step 1/2. In terms of biological role, catalyzes the transfer of a ribosyl phosphate group from 5-phosphoribose 1-diphosphate to orotate, leading to the formation of orotidine monophosphate (OMP). The polypeptide is Orotate phosphoribosyltransferase (Clostridium perfringens (strain ATCC 13124 / DSM 756 / JCM 1290 / NCIMB 6125 / NCTC 8237 / Type A)).